A 504-amino-acid polypeptide reads, in one-letter code: ATP synthase subunit alpha 1 (504 aa).

172–179 (GDRQTGKT) lines the ATP pocket.

The protein belongs to the ATPase alpha/beta chains family. As to quaternary structure, F-type ATPases have 2 components, CF(1) - the catalytic core - and CF(0) - the membrane proton channel. CF(1) has five subunits: alpha(3), beta(3), gamma(1), delta(1), epsilon(1). CF(0) has three main subunits: a(1), b(2) and c(9-12). The alpha and beta chains form an alternating ring which encloses part of the gamma chain. CF(1) is attached to CF(0) by a central stalk formed by the gamma and epsilon chains, while a peripheral stalk is formed by the delta and b chains.

It localises to the cell inner membrane. It carries out the reaction ATP + H2O + 4 H(+)(in) = ADP + phosphate + 5 H(+)(out). In terms of biological role, produces ATP from ADP in the presence of a proton gradient across the membrane. The alpha chain is a regulatory subunit. The chain is ATP synthase subunit alpha 1 from Rhodopirellula baltica (strain DSM 10527 / NCIMB 13988 / SH1).